The chain runs to 953 residues: Isoleucine--tRNA ligase (953 aa).

The 'HIGH' region motif lies at Pro57–His67. Residue Glu582 participates in L-isoleucyl-5'-AMP binding. The short motif at Lys623–Ser627 is the 'KMSKS' region element. Lys626 is an ATP binding site. Positions 916, 919, 936, and 939 each coordinate Zn(2+).

Belongs to the class-I aminoacyl-tRNA synthetase family. IleS type 1 subfamily. As to quaternary structure, monomer. The cofactor is Zn(2+).

It is found in the cytoplasm. It catalyses the reaction tRNA(Ile) + L-isoleucine + ATP = L-isoleucyl-tRNA(Ile) + AMP + diphosphate. Catalyzes the attachment of isoleucine to tRNA(Ile). As IleRS can inadvertently accommodate and process structurally similar amino acids such as valine, to avoid such errors it has two additional distinct tRNA(Ile)-dependent editing activities. One activity is designated as 'pretransfer' editing and involves the hydrolysis of activated Val-AMP. The other activity is designated 'posttransfer' editing and involves deacylation of mischarged Val-tRNA(Ile). The polypeptide is Isoleucine--tRNA ligase (Bordetella avium (strain 197N)).